The chain runs to 364 residues: Sulfate/thiosulfate import ATP-binding protein CysA (364 aa).

Residues isoleucine 3–methionine 237 enclose the ABC transporter domain. An ATP-binding site is contributed by glycine 35–threonine 42.

It belongs to the ABC transporter superfamily. Sulfate/tungstate importer (TC 3.A.1.6) family. In terms of assembly, the complex is composed of two ATP-binding proteins (CysA), two transmembrane proteins (CysT and CysW) and a solute-binding protein (CysP).

It localises to the cell inner membrane. It catalyses the reaction sulfate(out) + ATP + H2O = sulfate(in) + ADP + phosphate + H(+). The catalysed reaction is thiosulfate(out) + ATP + H2O = thiosulfate(in) + ADP + phosphate + H(+). In terms of biological role, part of the ABC transporter complex CysAWTP involved in sulfate/thiosulfate import. Responsible for energy coupling to the transport system. The chain is Sulfate/thiosulfate import ATP-binding protein CysA from Salmonella typhi.